A 1898-amino-acid polypeptide reads, in one-letter code: Receptor-type tyrosine-protein phosphatase F (1898 aa).

Residues Met1–Gly29 form the signal peptide. Over Asp30 to Trp1254 the chain is Extracellular. 3 consecutive Ig-like C2-type domains span residues Pro33–Ser123, Pro135–Tyr224, and Pro232–Thr314. Cysteines 54 and 107 form a disulfide. Position 68–77 (Lys68–Arg77) interacts with heparin. Asn117 carries an N-linked (GlcNAc...) asparagine glycan. A disulfide bond links Cys156 and Cys207. N-linked (GlcNAc...) asparagine glycosylation is found at Asn250 and Asn295. Cysteines 253 and 298 form a disulfide. Fibronectin type-III domains follow at residues Pro321–Gln411, Pro416–Gly510, Gln514–Ser604, Pro609–Asp706, Pro711–Ala810, Val811–Asp904, Phe909–Val1001, and Phe1005–Asp1089. The tract at residues Gly693–Pro712 is disordered. Asn721 carries N-linked (GlcNAc...) asparagine glycosylation. N-linked (GlcNAc...) asparagine glycosylation is found at Asn941, Asn957, and Asn960. Residues Val1255–Phe1275 form a helical membrane-spanning segment. At Lys1276–Thr1898 the chain is on the cytoplasmic side. Ser1296 bears the Phosphoserine mark. Tyrosine-protein phosphatase domains lie at Phe1343–Ala1598 and Met1630–Tyr1889. Substrate is bound by residues Asp1507, Cys1539 to Arg1545, and Gln1583. Cys1539 functions as the Phosphocysteine intermediate in the catalytic mechanism. Cys1830 functions as the Phosphocysteine intermediate in the catalytic mechanism.

Belongs to the protein-tyrosine phosphatase family. Receptor class 2A subfamily. In terms of assembly, interacts with GRIP1. Interacts with PPFIA1, PPFIA2 and PPFIA3. Interacts with PTPRF. As to expression, expressed in the cell of the T lineage but not in cells of any other hemopoietic lineage.

The protein resides in the membrane. It carries out the reaction O-phospho-L-tyrosyl-[protein] + H2O = L-tyrosyl-[protein] + phosphate. Functionally, possible cell adhesion receptor. It possesses an intrinsic protein tyrosine phosphatase activity (PTPase) and dephosphorylates EPHA2 regulating its activity. The sequence is that of Receptor-type tyrosine-protein phosphatase F (Ptprf) from Mus musculus (Mouse).